The chain runs to 209 residues: PF03932 family protein CutC (209 aa).

It belongs to the CutC family.

It is found in the cytoplasm. In terms of biological role, might participate in the control of copper homeostasis; data from other bacteria suggests it is not involved. This Enterococcus faecalis (strain ATCC 700802 / V583) protein is PF03932 family protein CutC.